The following is a 401-amino-acid chain: cAMP-dependent protein kinase type II-alpha regulatory subunit (401 aa).

S2 is subject to N-acetylserine. Residues 2 to 135 (SHIQIPPGLT…RLQEACKDIL (134 aa)) are dimerization and phosphorylation. The segment at 43–65 (ARSRASTPPAAPPSGSQDFDPGA) is disordered. The span at 46-58 (RASTPPAAPPSGS) shows a compositional bias: low complexity. Residues S48, S75, and S77 each carry the phosphoserine modification. S96 carries the post-translational modification Phosphoserine; by PKA. 3',5'-cyclic AMP contacts are provided by residues 136–257 (LFKN…ESVP), E205, R214, 258–401 (LLKS…DPGQ), E335, and R344. Position 212 is a phosphothreonine; by PDPK1 (T212). Phosphoserine occurs at positions 347 and 392.

This sequence belongs to the cAMP-dependent kinase regulatory chain family. In terms of assembly, the inactive form of the enzyme is composed of two regulatory chains and two catalytic chains. Activation by cAMP produces two active catalytic monomers and a regulatory dimer that binds four cAMP molecules. Interacts with AKAP4 and CBFA2T3. Interacts with the phosphorylated form of PJA2. Interacts with MYRIP; this interaction may link PKA to components of the exocytosis machinery, thus facilitating exocytosis, including insulin release. Forms a complex composed of PRKAR2A, GSK3B and GSKIP through GSKIP interaction; facilitates PKA-induced phosphorylation and regulates GSK3B activity. Interacts with ADCY8; inhibits adenylate cyclase activity through PKA phosphorylation. Post-translationally, a second phosphorylation site has not been located. Phosphorylation of Thr-212 by PDPK1 seems to attenuate the activity of PKA, perhaps by strengthening interaction between the regulatory and the catalytic subunits. In terms of tissue distribution, four types of regulatory chains are found: I-alpha, I-beta, II-alpha, and II-beta. Their expression varies among tissues and is in some cases constitutive and in others inducible.

Its subcellular location is the cytoplasm. The protein localises to the cell membrane. Its function is as follows. Regulatory subunit of the cAMP-dependent protein kinases involved in cAMP signaling in cells. Type II regulatory chains mediate membrane association by binding to anchoring proteins, including the MAP2 kinase. The chain is cAMP-dependent protein kinase type II-alpha regulatory subunit (PRKAR2A) from Bos taurus (Bovine).